The sequence spans 206 residues: Ribosomal RNA small subunit methyltransferase G (206 aa).

S-adenosyl-L-methionine is bound by residues Gly-73, Leu-78, 124-125 (VE), and Arg-139.

Belongs to the methyltransferase superfamily. RNA methyltransferase RsmG family.

The protein resides in the cytoplasm. The catalysed reaction is guanosine(527) in 16S rRNA + S-adenosyl-L-methionine = N(7)-methylguanosine(527) in 16S rRNA + S-adenosyl-L-homocysteine. In terms of biological role, specifically methylates the N7 position of guanine in position 527 of 16S rRNA. This Photobacterium profundum (strain SS9) protein is Ribosomal RNA small subunit methyltransferase G.